A 159-amino-acid chain; its full sequence is Phosphopantetheine adenylyltransferase (159 aa).

Residue T10 coordinates substrate. ATP-binding positions include 10–11 and H18; that span reads TF. Substrate is bound by residues K42, M74, and R88. ATP is bound by residues 89–91, E99, and 124–130; these read GLR and WSFISSS.

Belongs to the bacterial CoaD family. As to quaternary structure, homohexamer. Mg(2+) is required as a cofactor.

Its subcellular location is the cytoplasm. The catalysed reaction is (R)-4'-phosphopantetheine + ATP + H(+) = 3'-dephospho-CoA + diphosphate. It participates in cofactor biosynthesis; coenzyme A biosynthesis; CoA from (R)-pantothenate: step 4/5. Its function is as follows. Reversibly transfers an adenylyl group from ATP to 4'-phosphopantetheine, yielding dephospho-CoA (dPCoA) and pyrophosphate. In Salmonella dublin (strain CT_02021853), this protein is Phosphopantetheine adenylyltransferase.